The sequence spans 622 residues: Low affinity potassium transport system protein Kup (622 aa).

The next 12 membrane-spanning stretches (helical) occupy residues 9 to 29 (LPAV…TSPL), 52 to 72 (FLSL…LLFV), 99 to 119 (TPVL…EVVI), 137 to 157 (PSLQ…LFFI), 165 to 185 (VGKL…VLGV), 213 to 233 (VSFF…ALYA), 247 to 267 (WFSA…ALLL), 276 to 296 (PFFL…ATLA), 337 to 357 (IYIP…IVSF), 363 to 383 (LAAA…ILSC), 394 to 414 (LLIV…MFAA), and 419 to 439 (IFSG…AMIT).

The protein belongs to the HAK/KUP transporter (TC 2.A.72) family.

The protein resides in the cell inner membrane. The enzyme catalyses K(+)(in) + H(+)(in) = K(+)(out) + H(+)(out). Functionally, responsible for the low-affinity transport of potassium into the cell. Likely operates as a K(+):H(+) symporter. This chain is Low affinity potassium transport system protein Kup, found in Sodalis glossinidius (strain morsitans).